A 509-amino-acid chain; its full sequence is tRNA-2-methylthio-N(6)-dimethylallyladenosine synthase (509 aa).

Polar residues predominate over residues 1-13 (MNEQQRLASQQAN). Positions 1 to 26 (MNEQQRLASQQANSSKKKEEKDYSKY) are disordered. The segment covering 16 to 25 (KKKEEKDYSK) has biased composition (basic and acidic residues). The region spanning 66–184 (RKFYIRTYGC…LPYILKDAMF (119 aa)) is the MTTase N-terminal domain. Positions 75, 111, 145, 221, 225, and 228 each coordinate [4Fe-4S] cluster. In terms of domain architecture, Radical SAM core spans 207 to 437 (RRGDIKAWVN…NALVNKLAIE (231 aa)). One can recognise a TRAM domain in the interval 440–503 (NRYKGQIVEV…TWSLNGELVE (64 aa)).

This sequence belongs to the methylthiotransferase family. MiaB subfamily. In terms of assembly, monomer. [4Fe-4S] cluster serves as cofactor.

The protein localises to the cytoplasm. The catalysed reaction is N(6)-dimethylallyladenosine(37) in tRNA + (sulfur carrier)-SH + AH2 + 2 S-adenosyl-L-methionine = 2-methylsulfanyl-N(6)-dimethylallyladenosine(37) in tRNA + (sulfur carrier)-H + 5'-deoxyadenosine + L-methionine + A + S-adenosyl-L-homocysteine + 2 H(+). In terms of biological role, catalyzes the methylthiolation of N6-(dimethylallyl)adenosine (i(6)A), leading to the formation of 2-methylthio-N6-(dimethylallyl)adenosine (ms(2)i(6)A) at position 37 in tRNAs that read codons beginning with uridine. This Bacillus cereus (strain ATCC 10987 / NRS 248) protein is tRNA-2-methylthio-N(6)-dimethylallyladenosine synthase.